The following is an 898-amino-acid chain: DNA damage-induced apoptosis suppressor protein (898 aa).

Disordered regions lie at residues 191 to 210 (CGSQ…DSDL), 643 to 670 (SINT…HEGS), and 710 to 749 (YPIN…FEES). 2 stretches are compositionally biased toward polar residues: residues 643 to 664 (SINT…PSSS) and 710 to 725 (YPIN…KPSL). Low complexity predominate over residues 726–741 (QSISPSRYSRPRSQSD).

In terms of tissue distribution, highly expressed in the testis, spleen and heart. Expressed at high levels in the primary spermatocytes and to a lesser extent in the round spermatids. Also found in the bone marrow, brain, lung, kidney and liver.

It is found in the cytoplasm. The protein resides in the nucleus. Its function is as follows. May be an anti-apoptotic protein involved in DNA repair or cell survival. In Mus musculus (Mouse), this protein is DNA damage-induced apoptosis suppressor protein (Ddias).